The primary structure comprises 146 residues: Ribonuclease H (146 aa).

The region spanning 1–143 (MQKKIIVYTD…CDELARQAIK (143 aa)) is the RNase H type-1 domain. Residues aspartate 10, glutamate 48, aspartate 70, and aspartate 135 each contribute to the Mg(2+) site.

This sequence belongs to the RNase H family. Monomer. Mg(2+) serves as cofactor.

The protein localises to the cytoplasm. It catalyses the reaction Endonucleolytic cleavage to 5'-phosphomonoester.. Endonuclease that specifically degrades the RNA of RNA-DNA hybrids. In Chlorobium phaeobacteroides (strain DSM 266 / SMG 266 / 2430), this protein is Ribonuclease H.